An 846-amino-acid polypeptide reads, in one-letter code: MFLHSPALLIWLFLFCLAGPQAVRTEPYNSTSSSSSPTANDVTSSDLLLLASEETPTRAPKPVTKQGKKNVVKVKKGGNGTVDDSPWVTDCSEPLNKDISCSVNIIGCSDNVFKYVDAGQEPPRAHDVRIAPTTKVMGANRIDKRKHRLHVDVSWQIPQLEASTHLKAFKLIVNGPDGKNTCFVFNVTQTHVDDEGISPRYRFSSNTLFDFGHNYTVTIVSLPMSRKRAPKVSATSLMPDDPDAAPVKIVKTNEQMCEGKSNPQASKWAASFRKIFLFSAIRLIQIEFLAAPPQYCFEEYEVRLLDSSGIVMLQSAIITKDELRTEIINGRPVQFGEFNFTDIELDTDLIPSVIPIESAHDGRCLCVTENGCSCLAADWKPVKLTRIEKPPATSNQTEESDGKAEKDKKEDTTWTWHTYAITGGAIIAILFILSVCAGLKCYKKFNNKKKASNIHLLNENPAFSHSGSIPLILKQSISVLIVYSHDSAQHEAAVLAFAELLRDVFNLNVHLDVWDEDDIEENRAEYINSSIVRANKVIIINSIGAYFRTVFRHQREPAIERITTGRNDVIFDMQCELALQHPCVISCHFSYTNPKYVFFPINRLLQYSIPNSLMTMTTALTEQPARPEQLAGFNQVFARLQAAISRKLNYIESDPQWFENTHHRVATRRVSELEAHNIVPLPPSLEVKVEDEDAFGQMETLPIDELKEKFAAKRDLEVEVLDSEDVKLLEDVKCAPGPIHVEPTEPEVLEPAEEPMEEAEEDEEDEDDVDSVEGQTARIEELQRLIVHKDMNHDSGNLDSAYVSGSDFSADIHNEILDKPRLNAEMDLRKANREDSAFHDEVIGIH.

The N-terminal stretch at Met-1–Thr-25 is a signal peptide. The Extracellular portion of the chain corresponds to Glu-26–Thr-418. N-linked (GlcNAc...) asparagine glycans are attached at residues Asn-29, Asn-79, Asn-186, Asn-214, Asn-339, and Asn-395. Residues Glu-388–Lys-409 are disordered. The span at Ser-400–Lys-409 shows a compositional bias: basic and acidic residues. Residues Tyr-419–Leu-439 form a helical membrane-spanning segment. At Lys-440–His-846 the chain is on the cytoplasmic side. One can recognise an SEFIR domain in the interval Ser-476–Thr-618. The interval Gly-737–Ser-771 is disordered. The span at Thr-744–Ser-771 shows a compositional bias: acidic residues.

In terms of assembly, component of a heterodimeric receptor complex composed of ilcr-1 and ilcr-2. The receptor complex interacts with actl-1 and ilc-17.1 with the interaction being mediated by ilcr-2. Expressed in most neurons.

The protein localises to the cell membrane. Forms a receptor complex together with receptor ilcr-2, which upon activation acts as a modulator of neuronal activity. Binding of the ligand ilc-17.1 to the ilcr-1/2 receptor complex triggers a signaling cascade that activates the downstream signaling components actl-1, pik-1 and nfki-1, and results in increased neuronal activity in RMG interneurons in response to input from oxygen-sensing neurons. This leads to increased animal movement and promotes aggregation behavior. The polypeptide is Interleukin cytokine receptor-related protein 1 (Caenorhabditis elegans).